The sequence spans 352 residues: Protein NDRG4 (352 aa).

3 positions are modified to phosphoserine: S298, S317, and S323. The disordered stretch occupies residues 301–352; that stretch reads AVPSASMTRLARSRTASLTSASSVDGSRPQPCTHSDSSEGMGQVNHTMEVSC. The span at 308-323 shows a compositional bias: low complexity; the sequence is TRLARSRTASLTSASS. Positions 330 to 352 are enriched in polar residues; that stretch reads QPCTHSDSSEGMGQVNHTMEVSC.

The protein belongs to the NDRG family. In terms of tissue distribution, expressed in the brain and heart, weakly in the kidney; most prominently in postnatal brain where it is expressed widely in the olfactory bulb, cerebral cortex, hippocampus, cerebellum, thalamus, and medulla oblongata.

Its subcellular location is the cytoplasm. It localises to the cytosol. In terms of biological role, contributes to the maintenance of intracerebral BDNF levels within the normal range, which is necessary for the preservation of spatial learning and the resistance to neuronal cell death caused by ischemic stress. May enhance growth factor-induced ERK1 and ERK2 phosphorylation, including that induced by NGF. May attenuate NGF-promoted ELK1 phosphorylation in a microtubule-dependent manner. This is Protein NDRG4 (Ndrg4) from Rattus norvegicus (Rat).